Consider the following 81-residue polypeptide: ATP synthase subunit c, chloroplastic (81 aa).

Helical transmembrane passes span 4–24 (VISAASVIAAGLAVGLASIGP) and 57–77 (LAFMEALTIYGLVVALALLFA).

It belongs to the ATPase C chain family. F-type ATPases have 2 components, F(1) - the catalytic core - and F(0) - the membrane proton channel. F(1) has five subunits: alpha(3), beta(3), gamma(1), delta(1), epsilon(1). F(0) has four main subunits: a(1), b(1), b'(1) and c(10-14). The alpha and beta chains form an alternating ring which encloses part of the gamma chain. F(1) is attached to F(0) by a central stalk formed by the gamma and epsilon chains, while a peripheral stalk is formed by the delta, b and b' chains.

Its subcellular location is the plastid. The protein resides in the chloroplast thylakoid membrane. F(1)F(0) ATP synthase produces ATP from ADP in the presence of a proton or sodium gradient. F-type ATPases consist of two structural domains, F(1) containing the extramembraneous catalytic core and F(0) containing the membrane proton channel, linked together by a central stalk and a peripheral stalk. During catalysis, ATP synthesis in the catalytic domain of F(1) is coupled via a rotary mechanism of the central stalk subunits to proton translocation. Functionally, key component of the F(0) channel; it plays a direct role in translocation across the membrane. A homomeric c-ring of between 10-14 subunits forms the central stalk rotor element with the F(1) delta and epsilon subunits. In Zygnema circumcarinatum (Green alga), this protein is ATP synthase subunit c, chloroplastic.